The primary structure comprises 84 residues: U8-theraphotoxin-Hhn1e (84 aa).

The signal sequence occupies residues 1-21 (MKVVLLVCLVWMMAMMELVSC). 5 cysteine pairs are disulfide-bonded: Cys-23/Cys-35, Cys-29/Cys-44, Cys-34/Cys-67, Cys-54/Cys-75, and Cys-69/Cys-81.

The protein belongs to the AVIT (prokineticin) family. As to expression, expressed by the venom gland.

The protein localises to the secreted. This is U8-theraphotoxin-Hhn1e from Cyriopagopus hainanus (Chinese bird spider).